Consider the following 150-residue polypeptide: Small ribosomal subunit protein eS6 (150 aa).

This sequence belongs to the eukaryotic ribosomal protein eS6 family.

This chain is Small ribosomal subunit protein eS6, found in Caldivirga maquilingensis (strain ATCC 700844 / DSM 13496 / JCM 10307 / IC-167).